The sequence spans 226 residues: ATP synthase subunit a (226 aa).

The next 6 membrane-spanning stretches (helical) occupy residues 18 to 38 (FITG…SLGA), 79 to 99 (LAGT…IPGF), 105 to 125 (SWSF…FEGI), 134 to 154 (FAHF…IEII), 179 to 199 (LIML…VLFF), and 201 to 221 (GILQ…GAVL).

This sequence belongs to the ATPase A chain family. In terms of assembly, F-type ATPases have 2 components, CF(1) - the catalytic core - and CF(0) - the membrane proton channel. CF(1) has five subunits: alpha(3), beta(3), gamma(1), delta(1), epsilon(1). CF(0) has three main subunits: a(1), b(2) and c(9-12). The alpha and beta chains form an alternating ring which encloses part of the gamma chain. CF(1) is attached to CF(0) by a central stalk formed by the gamma and epsilon chains, while a peripheral stalk is formed by the delta and b chains.

It is found in the cell inner membrane. Functionally, key component of the proton channel; it plays a direct role in the translocation of protons across the membrane. This is ATP synthase subunit a from Helicobacter pylori (strain HPAG1).